The sequence spans 959 residues: Bifunctional premutilin synthase (959 aa).

The class II diterpene cyclase stretch occupies residues 1 to 542 (MGLSEDLHAR…ALNVPIPRFD (542 aa)). Positions 309 to 312 (DADM) match the DXDD motif motif. The active-site For class II diterpene cyclase activity is the aspartate 311. The tract at residues 543 to 959 (PSSISTLPAI…TANGSNGIHH (417 aa)) is class I diterpene synthase. The For class I diterpene synthase activity role is filled by aspartate 649. Mg(2+) is bound by residues aspartate 649, aspartate 653, and asparagine 824. The short motif at 649 to 653 (DDYLD) is the DDXXD motif element. Residues 931 to 959 (KGTNGVKKINGSSTNGTKVTANGSNGIHH) form a disordered region. Polar residues predominate over residues 940–959 (NGSSTNGTKVTANGSNGIHH).

Belongs to the terpene synthase family. The cofactor is Mg(2+).

Its pathway is secondary metabolite biosynthesis; terpenoid biosynthesis. Bifunctional premutilin synthase; part of the gene cluster that mediates the biosynthesis of pleuromutilin, a tricyclic diterpene showing antibacterial properties. The geranylgeranyl diphosphate (GGPP) synthase catalyzes the first step in pleuromutilin biosynthesis. GGPP is then substrate of the premutilin synthase (PS) to yield premutilin. Premutilin synthase is a bifunctional enzyme composed of the fusion of a class II diterpene cyclase (DTC) and a class I diterpene synthase (DTS), with the corresponding domains and active sites containing characteristic aspartate-rich motifs. GGPP is first converted to mutildienyl-diphosphate (MPP) at the class II DTC site. MPP is subsequently further cyclized at the class I DTS site, followed by a 1,5-hydride shift and addition of water prior to terminating deprotonation, to yield premutilin. In addition to the aforementioned GGPP synthase and bifunctional diterpene synthase, the cluster also contains three cytochrome P450 monooxygenases, a short-chain alcohol dehydrogenase, and an acyltransferase, involved in the conversion of premutilin to pleuromutilin. The cytochrome P450 monooxygenases P450-1 and P450-2 hydroxylate premutilin at C-11 and C-3, respectively, producing 11-hydroxypremutilin and 3-hydroxypremutilin. The combination of the actions of both ple5 and ple6 leads to the production of 3,11-dihydroxypremutilin. The short chain dehydrogenase SDR further converts 3,11-dihydroxypremutilin into mutilin. The acetyltransferase ATF then acetylates mutilin to produce 14-O-acetylmutilin. Finally, the cytochrome P450 monooxygenase P450-3 catalyzes hydroxylation on the alpha position of the acetyl side chain of 14-O-acetylmutilin to yield pleuromutilin. The chain is Bifunctional premutilin synthase from Clitopilus passeckerianus (Pleurotus passeckerianus).